Reading from the N-terminus, the 292-residue chain is Probable E3 ubiquitin-protein ligase RNF144A (292 aa).

The interval 16 to 236 (PLVSCKLCLG…YDKGPCRNKL (221 aa)) is TRIAD supradomain. Residues Cys-20, Cys-23, Cys-43, Cys-46, Cys-111, Cys-116, Cys-135, Cys-138, Cys-143, Cys-146, His-151, Cys-156, Cys-185, and Cys-188 each contribute to the Zn(2+) site. The RING-type 1 zinc finger occupies 20-70 (CKLCLGEYTVEQMTTIAQCQCIFCTLCLKQYVELLIKEGLETAISCPDASC). The IBR-type zinc finger occupies 91-156 (QKYKKLQFEK…KANWHPGQGC (66 aa)). Residues 185–214 (CPKCKVYIERDEGCAQMMCKNCKHAFCWYC) form an RING-type 2; atypical zinc finger. Cys-198 is a catalytic residue. Cys-203, Cys-206, Cys-211, Cys-214, His-226, and Cys-232 together coordinate Zn(2+). A helical membrane pass occupies residues 250–270 (VVGIFAGFGLLLLVASPFLLL).

This sequence belongs to the RBR family. RNF144 subfamily.

It localises to the membrane. It carries out the reaction [E2 ubiquitin-conjugating enzyme]-S-ubiquitinyl-L-cysteine + [acceptor protein]-L-lysine = [E2 ubiquitin-conjugating enzyme]-L-cysteine + [acceptor protein]-N(6)-ubiquitinyl-L-lysine.. It functions in the pathway protein modification; protein ubiquitination. Functionally, E3 ubiquitin-protein ligase which accepts ubiquitin from E2 ubiquitin-conjugating enzymes ube2l3 and ube2l6 in the form of a thioester and then directly transfers the ubiquitin to targeted substrates. The protein is Probable E3 ubiquitin-protein ligase RNF144A (rnf144a) of Xenopus tropicalis (Western clawed frog).